A 197-amino-acid polypeptide reads, in one-letter code: Neurturin (197 aa).

The first 19 residues, 1-19, serve as a signal peptide directing secretion; that stretch reads MQRWKAAALASVLCSSVLS. A propeptide spanning residues 20–95 is cleaved from the precursor; that stretch reads IWMCREGLLL…RAGPRRRRAR (76 aa). Residues 74-93 form a disordered region; the sequence is TPWAGRPPGPRRRAGPRRRR. Over residues 82-93 the composition is skewed to basic residues; the sequence is GPRRRAGPRRRR. 3 disulfide bridges follow: cysteine 103-cysteine 165, cysteine 130-cysteine 194, and cysteine 134-cysteine 196. The heparan sulfate group site is built by arginine 149, arginine 158, arginine 160, and glutamine 162.

The protein belongs to the TGF-beta family. GDNF subfamily. In terms of assembly, homodimer; disulfide-linked. Interacts with GFRA2 coreceptor and RET: forms a 2:2:2 ternary complex composed of NRTN ligand, GFRA2 and RET receptor. Also forms a 4:4:4 tetrameric complex composed of 4 copies of NRTN ligand, GFRA2 and RET receptor, which prevents endocytosis of RET.

It is found in the secreted. Functionally, growth factor that supports the survival of sympathetic neurons in culture. May regulate the development and maintenance of the CNS. Involved in the development of the neural crest. Might control the size of non-neuronal cell population such as haemopoietic cells. Acts by binding to its coreceptor, GFRA2, leading to autophosphorylation and activation of the RET receptor. Heparan sulfate-binding is required for signaling. The polypeptide is Neurturin (Homo sapiens (Human)).